We begin with the raw amino-acid sequence, 186 residues long: MATGKQILNEAKDKMAKSGDALRRTLADIRAGRANASLLNGVKVDYYGAPTPLNQVASITIPEARQLLVTPYDESSLDNIEKAIYAANLGLTPQNDGSAIRILIPQLTEERRKELVKDVKAELEKAKVAVRNVRREAMDDLKKGNKDGDFNDDEFHDLEKKVQTETDNGIKNLENIAADKEKELMG.

The protein belongs to the RRF family.

The protein localises to the cytoplasm. Its function is as follows. Responsible for the release of ribosomes from messenger RNA at the termination of protein biosynthesis. May increase the efficiency of translation by recycling ribosomes from one round of translation to another. The sequence is that of Ribosome-recycling factor from Limosilactobacillus reuteri (Lactobacillus reuteri).